The sequence spans 113 residues: Protein Asterix (113 aa).

Residues 81-97 (IVSSFMLSVSAVVMSYL) traverse the membrane as a helical segment.

It belongs to the Asterix family.

Its subcellular location is the membrane. This chain is Protein Asterix, found in Caenorhabditis elegans.